The sequence spans 264 residues: NAD-capped RNA hydrolase NudC (264 aa).

2 residues coordinate Zn(2+): Cys-99 and Cys-102. Position 112 (Glu-112) interacts with substrate. Positions 117 and 120 each coordinate Zn(2+). Position 125 (Tyr-125) interacts with substrate. In terms of domain architecture, Nudix hydrolase spans Pro-126 to Thr-253. A divalent metal cation contacts are provided by Ala-162, Glu-178, and Glu-182. Residues Gly-163–Gly-184 carry the Nudix box motif. A substrate-binding site is contributed by Gln-196–Ser-203. Glu-223 provides a ligand contact to a divalent metal cation. A substrate-binding site is contributed by Ala-246.

This sequence belongs to the Nudix hydrolase family. NudC subfamily. Homodimer. Mg(2+) serves as cofactor. Mn(2+) is required as a cofactor. It depends on Zn(2+) as a cofactor.

It carries out the reaction a 5'-end NAD(+)-phospho-ribonucleoside in mRNA + H2O = a 5'-end phospho-adenosine-phospho-ribonucleoside in mRNA + beta-nicotinamide D-ribonucleotide + 2 H(+). It catalyses the reaction NAD(+) + H2O = beta-nicotinamide D-ribonucleotide + AMP + 2 H(+). The enzyme catalyses NADH + H2O = reduced beta-nicotinamide D-ribonucleotide + AMP + 2 H(+). Its function is as follows. mRNA decapping enzyme that specifically removes the nicotinamide adenine dinucleotide (NAD) cap from a subset of mRNAs by hydrolyzing the diphosphate linkage to produce nicotinamide mononucleotide (NMN) and 5' monophosphate mRNA. The NAD-cap is present at the 5'-end of some mRNAs and stabilizes RNA against 5'-processing. Has preference for mRNAs with a 5'-end purine. Catalyzes the hydrolysis of a broad range of dinucleotide pyrophosphates. This chain is NAD-capped RNA hydrolase NudC, found in Haemophilus influenzae (strain ATCC 51907 / DSM 11121 / KW20 / Rd).